A 278-amino-acid polypeptide reads, in one-letter code: HTH-type transcriptional activator RhaS (278 aa).

The HTH araC/xylS-type domain occupies 174–272 (NLLLAWLEDH…NWSPRDIRQG (99 aa)). 2 DNA-binding regions (H-T-H motif) span residues 191–212 (DAVA…KQQT) and 239–262 (VTDI…RREF).

In terms of assembly, binds DNA as a dimer.

It localises to the cytoplasm. Functionally, activates expression of the rhaBAD and rhaT operons. This is HTH-type transcriptional activator RhaS from Shigella sonnei (strain Ss046).